The sequence spans 376 residues: MHCARYSTGTCRSCQWLEKAYPQQLSDKQQHLEGLLQPHAVQRWLPVQPSAQSAFRNKAKMVVSGSVERPLLGMLHRDGTAVDLCDCPLYPSSFASVFDVLKVFIARAGLTPYNVARRRGELKYLLLTESTQRGTFMLRFVLRSETKLAQLRAALPWLQQQLPQLEVISANIQPVHQAIMEGKTEIILSEAAALAEQFNQVPLYIRPQSFFQTNPQVAAALYATARDWVAELNITSMWDLFCGVGGFGLHCASPEMRLTGIEISAEAIACARRSAEQLGLKQVEFQALDSTQFATGKAEIPELVLVNPPRRGIGSELCTYLSRMAPDYILYSSCNAESMAKDMTELTNYRALRVQLFDMFPHTAHYEVLTLLKREI.

Positions 3, 11, 14, and 87 each coordinate [4Fe-4S] cluster. The S-adenosyl-L-methionine site is built by Gln212, Phe241, Glu262, and Asn307. Cys334 acts as the Nucleophile in catalysis.

It belongs to the class I-like SAM-binding methyltransferase superfamily. RNA M5U methyltransferase family. RlmC subfamily.

The catalysed reaction is uridine(747) in 23S rRNA + S-adenosyl-L-methionine = 5-methyluridine(747) in 23S rRNA + S-adenosyl-L-homocysteine + H(+). Its function is as follows. Catalyzes the formation of 5-methyl-uridine at position 747 (m5U747) in 23S rRNA. In Pectobacterium carotovorum subsp. carotovorum (strain PC1), this protein is 23S rRNA (uracil(747)-C(5))-methyltransferase RlmC.